A 191-amino-acid polypeptide reads, in one-letter code: MLLSDKDIRAEIDAGRVRIDPYDESMVQPSSIDVRLDRYFRVFENHRYPHIDPSVEQADLTRLVEPEGDEPFILHPGEFVLASTYEVISLPDDLASRLEGKSSLGRLGLVTHSTAGFIDPGFSGHVTLELSNLATLPIKLWPGMKIGQLCMFRLSSPAEFPYGSDRYGSRYQGQRGPTASRSFLNFHRTQV.

Residues 101-106, Asp-119, 127-129, Gln-148, Tyr-162, and Gln-174 each bind dCTP; these read KSSLGR and TLE. Glu-129 (proton donor/acceptor) is an active-site residue.

This sequence belongs to the dCTP deaminase family. Homotrimer.

It carries out the reaction dCTP + 2 H2O = dUMP + NH4(+) + diphosphate. The protein operates within pyrimidine metabolism; dUMP biosynthesis; dUMP from dCTP: step 1/1. Functionally, bifunctional enzyme that catalyzes both the deamination of dCTP to dUTP and the hydrolysis of dUTP to dUMP without releasing the toxic dUTP intermediate. This is dCTP deaminase, dUMP-forming from Streptomyces avermitilis (strain ATCC 31267 / DSM 46492 / JCM 5070 / NBRC 14893 / NCIMB 12804 / NRRL 8165 / MA-4680).